A 448-amino-acid chain; its full sequence is Exodeoxyribonuclease 7 large subunit (448 aa).

It belongs to the XseA family. As to quaternary structure, heterooligomer composed of large and small subunits.

The protein resides in the cytoplasm. It catalyses the reaction Exonucleolytic cleavage in either 5'- to 3'- or 3'- to 5'-direction to yield nucleoside 5'-phosphates.. Functionally, bidirectionally degrades single-stranded DNA into large acid-insoluble oligonucleotides, which are then degraded further into small acid-soluble oligonucleotides. This chain is Exodeoxyribonuclease 7 large subunit, found in Nitrosomonas eutropha (strain DSM 101675 / C91 / Nm57).